The sequence spans 209 residues: Large ribosomal subunit protein uL3 (209 aa).

The disordered stretch occupies residues alanine 132 to glycine 153. At glutamine 150 the chain carries N5-methylglutamine.

This sequence belongs to the universal ribosomal protein uL3 family. As to quaternary structure, part of the 50S ribosomal subunit. Forms a cluster with proteins L14 and L19. Methylated by PrmB.

One of the primary rRNA binding proteins, it binds directly near the 3'-end of the 23S rRNA, where it nucleates assembly of the 50S subunit. This chain is Large ribosomal subunit protein uL3, found in Enterobacter sp. (strain 638).